Consider the following 82-residue polypeptide: RNA-binding protein YbxF (82 aa).

This sequence belongs to the eukaryotic ribosomal protein eL8 family.

This chain is RNA-binding protein YbxF, found in Geobacillus stearothermophilus (Bacillus stearothermophilus).